The sequence spans 510 residues: 2,3-bisphosphoglycerate-independent phosphoglycerate mutase (510 aa).

D12 and S62 together coordinate Mn(2+). S62 (phosphoserine intermediate) is an active-site residue. Substrate is bound by residues H123, R153–D154, R185, R191, R260–R263, and K335. 5 residues coordinate Mn(2+): D402, H406, D443, H444, and H461.

It belongs to the BPG-independent phosphoglycerate mutase family. As to quaternary structure, monomer. Mn(2+) is required as a cofactor.

The catalysed reaction is (2R)-2-phosphoglycerate = (2R)-3-phosphoglycerate. It functions in the pathway carbohydrate degradation; glycolysis; pyruvate from D-glyceraldehyde 3-phosphate: step 3/5. In terms of biological role, catalyzes the interconversion of 2-phosphoglycerate and 3-phosphoglycerate. The chain is 2,3-bisphosphoglycerate-independent phosphoglycerate mutase from Listeria innocua serovar 6a (strain ATCC BAA-680 / CLIP 11262).